The sequence spans 262 residues: MKIALGIEYDGCRYCGWQRQQYVDSVQQRLEEALSVIANSSCEVFCAGRTDAGVHATGQVVHFDTDVNRPMQSWCLGTNAHLPEDIVVKWAIGVSDDFHARFSALARRYRYVIYNNKLRSAILPKGISHYHYSLDHEKMHEAGQFLLGENDFSSFRAAKCQSHTPWRNVHHLIVSRHQDYIILDIQANAFVHHMVRNIVGSLIEVGRGDKPVEWIKWLLEKRDRTLAAPTAKAEGLYLVEVIYPEKFSIPQMPLGPLFYYGK.

Asp51 functions as the Nucleophile in the catalytic mechanism. Tyr109 contacts substrate.

Belongs to the tRNA pseudouridine synthase TruA family. In terms of assembly, homodimer.

The catalysed reaction is uridine(38/39/40) in tRNA = pseudouridine(38/39/40) in tRNA. Its function is as follows. Formation of pseudouridine at positions 38, 39 and 40 in the anticodon stem and loop of transfer RNAs. The protein is tRNA pseudouridine synthase A of Glaesserella parasuis serovar 5 (strain SH0165) (Haemophilus parasuis).